Here is a 173-residue protein sequence, read N- to C-terminus: MSQTTESPMKKISLEKVVLNMGVGKSGDVIEIASRALEQISGKKPSARNAKETQRDWGVRKGEPIGVAVTIRGDDAKALLKRLLEAKGNTVNGRAFDNFGNYSFGIREHIDIPGVKYEPSIGILGLGISVTLTRPGYGIRTRSKHKASVGKSHIITSQEAKDYLVKEFGVTVA.

The protein belongs to the universal ribosomal protein uL5 family. Part of the 50S ribosomal subunit; contacts the 5S rRNA and probably tRNA. Forms a bridge to the 30S subunit in the 70S ribosome.

This is one of the proteins that bind and probably mediate the attachment of the 5S RNA into the large ribosomal subunit, where it forms part of the central protuberance. In the 70S ribosome it contacts protein S13 of the 30S subunit (bridge B1b), connecting the 2 subunits; this bridge is implicated in subunit movement. May contact the P site tRNA; the 5S rRNA and some of its associated proteins might help stabilize positioning of ribosome-bound tRNAs. This chain is Large ribosomal subunit protein uL5, found in Nitrosopumilus maritimus (strain SCM1).